Here is a 257-residue protein sequence, read N- to C-terminus: NAD-capped RNA hydrolase NudC (257 aa).

Residues Lys25 and Arg69 each contribute to the substrate site. Zn(2+) is bound by residues Cys98 and Cys101. Position 111 (Glu111) interacts with substrate. Residues Cys116 and Cys119 each coordinate Zn(2+). Tyr124 is a substrate binding site. In terms of domain architecture, Nudix hydrolase spans 125–248; it reads PQIAPCIIVA…TVARRLIEDT (124 aa). Ala158, Glu174, and Glu178 together coordinate a divalent metal cation. The Nudix box motif lies at 159–180; sequence GFVEVGETLEQAVAREVMEESG. 192-199 contributes to the substrate binding site; the sequence is QPWPFPQS. Residue Glu219 participates in a divalent metal cation binding. Residue Ala241 coordinates substrate.

It belongs to the Nudix hydrolase family. NudC subfamily. In terms of assembly, homodimer. Mg(2+) is required as a cofactor. It depends on Mn(2+) as a cofactor. Zn(2+) serves as cofactor.

It carries out the reaction a 5'-end NAD(+)-phospho-ribonucleoside in mRNA + H2O = a 5'-end phospho-adenosine-phospho-ribonucleoside in mRNA + beta-nicotinamide D-ribonucleotide + 2 H(+). The enzyme catalyses NAD(+) + H2O = beta-nicotinamide D-ribonucleotide + AMP + 2 H(+). The catalysed reaction is NADH + H2O = reduced beta-nicotinamide D-ribonucleotide + AMP + 2 H(+). MRNA decapping enzyme that specifically removes the nicotinamide adenine dinucleotide (NAD) cap from a subset of mRNAs by hydrolyzing the diphosphate linkage to produce nicotinamide mononucleotide (NMN) and 5' monophosphate mRNA. The NAD-cap is present at the 5'-end of some mRNAs and stabilizes RNA against 5'-processing. Has preference for mRNAs with a 5'-end purine. Catalyzes the hydrolysis of a broad range of dinucleotide pyrophosphates. The sequence is that of NAD-capped RNA hydrolase NudC from Escherichia coli O7:K1 (strain IAI39 / ExPEC).